Reading from the N-terminus, the 746-residue chain is Polyribonucleotide nucleotidyltransferase (746 aa).

Asp-520 and Asp-526 together coordinate Mg(2+). The region spanning 586–648 (PRIITVKVPV…EAARAAVNAI (63 aa)) is the KH domain. One can recognise an S1 motif domain in the interval 657-729 (GERYLGTVVK…PRGKLSLVPV (73 aa)).

The protein belongs to the polyribonucleotide nucleotidyltransferase family. The cofactor is Mg(2+).

Its subcellular location is the cytoplasm. It carries out the reaction RNA(n+1) + phosphate = RNA(n) + a ribonucleoside 5'-diphosphate. Involved in mRNA degradation. Catalyzes the phosphorolysis of single-stranded polyribonucleotides processively in the 3'- to 5'-direction. This chain is Polyribonucleotide nucleotidyltransferase, found in Kineococcus radiotolerans (strain ATCC BAA-149 / DSM 14245 / SRS30216).